We begin with the raw amino-acid sequence, 496 residues long: Maturase K (496 aa).

Belongs to the intron maturase 2 family. MatK subfamily.

Its subcellular location is the plastid. It localises to the chloroplast. Its function is as follows. Usually encoded in the trnK tRNA gene intron. Probably assists in splicing its own and other chloroplast group II introns. The chain is Maturase K from Paeonia suffruticosa (Tree peony).